Here is a 479-residue protein sequence, read N- to C-terminus: Ribosomal RNA small subunit methyltransferase F (479 aa).

S-adenosyl-L-methionine-binding positions include 125–131 (AAAPGSK), Glu149, Asp176, and Asp194. Cys247 (nucleophile) is an active-site residue.

The protein belongs to the class I-like SAM-binding methyltransferase superfamily. RsmB/NOP family.

It is found in the cytoplasm. It catalyses the reaction cytidine(1407) in 16S rRNA + S-adenosyl-L-methionine = 5-methylcytidine(1407) in 16S rRNA + S-adenosyl-L-homocysteine + H(+). In terms of biological role, specifically methylates the cytosine at position 1407 (m5C1407) of 16S rRNA. This is Ribosomal RNA small subunit methyltransferase F (rsmF) from Escherichia coli (strain K12).